Consider the following 268-residue polypeptide: Small ribosomal subunit protein uS2 (268 aa).

Belongs to the universal ribosomal protein uS2 family.

In Coprothermobacter proteolyticus (strain ATCC 35245 / DSM 5265 / OCM 4 / BT), this protein is Small ribosomal subunit protein uS2.